Reading from the N-terminus, the 633-residue chain is Telomere-binding protein 1 (633 aa).

A disordered region spans residues 253-272; that stretch reads HAADRDDDENSSGCVHPSTS. Over residues 263-272 the composition is skewed to polar residues; sequence SSGCVHPSTS. Residues 351–430 form the Ubiquitin-like domain; the sequence is VKLTIKSFNI…LNDIGFTLEC (80 aa). A sufficient for telomeric DNA binding region spans residues 506-615; sequence PFADPNSLAL…RVLAAQAYWS (110 aa). One can recognise an HTH myb-type domain in the interval 529–588; it reads GQRRIRRPFTVAEVELLVEAVEHLGTGRWRDVKFRAFENVHHRTYVDLKDKWKTLVHTAS. The 51-residue stretch at 534 to 584 folds into the SANT domain; sequence RRPFTVAEVELLVEAVEHLGTGRWRDVKFRAFENVHHRTYVDLKDKWKTLV. A DNA-binding region (H-T-H motif) is located at residues 557 to 584; it reads WRDVKFRAFENVHHRTYVDLKDKWKTLV.

As to quaternary structure, homodimer. As to expression, ubiquitous.

The protein resides in the chromosome. It localises to the telomere. Its function is as follows. Binds the telomeric double-stranded 5'TTTAGGG-3' repeat and regulates telomere length and structure. This Oryza sativa subsp. japonica (Rice) protein is Telomere-binding protein 1 (TBP1).